Here is a 210-residue protein sequence, read N- to C-terminus: MRTKKLPALRVGVGGPVGSGKTTLLEMLCKAMRERYDLVAITNDIYTKEDQRLLTLSGALPAERIMGVETGGCPHTAIREDASINLEAVDRMLARFPDADVVFIESGGDNLAATFSPELSDLTIYVIDVAGGEKIPRKGGPGITKSDLLIINKTDLAPYVGASLDVMASDARKMRGDRPFVMCNLKEQAGLDAVVRFIEQQGMLAAPAAG.

15–22 lines the GTP pocket; sequence GPVGSGKT.

This sequence belongs to the SIMIBI class G3E GTPase family. UreG subfamily. Homodimer. UreD, UreF and UreG form a complex that acts as a GTP-hydrolysis-dependent molecular chaperone, activating the urease apoprotein by helping to assemble the nickel containing metallocenter of UreC. The UreE protein probably delivers the nickel.

It localises to the cytoplasm. Functionally, facilitates the functional incorporation of the urease nickel metallocenter. This process requires GTP hydrolysis, probably effectuated by UreG. In Ralstonia nicotianae (strain ATCC BAA-1114 / GMI1000) (Ralstonia solanacearum), this protein is Urease accessory protein UreG.